We begin with the raw amino-acid sequence, 559 residues long: CTP synthase (559 aa).

Residues 1–283 (MSTSRTTTNN…DTFLIRRLDL (283 aa)) form an amidoligase domain region. S25 provides a ligand contact to CTP. S25 contacts UTP. ATP-binding positions include 26-31 (SLGKGL) and D83. Residues D83 and E157 each contribute to the Mg(2+) site. CTP contacts are provided by residues 164-166 (DIE), 204-209 (KTKPTQ), and K240. UTP is bound by residues 204 to 209 (KTKPTQ) and K240. A Glutamine amidotransferase type-1 domain is found at 308 to 557 (TVGIVGKYVD…VAAALAAAVT (250 aa)). Residue G371 participates in L-glutamine binding. C398 functions as the Nucleophile; for glutamine hydrolysis in the catalytic mechanism. L-glutamine contacts are provided by residues 399–402 (LGLQ), E421, and R482. Active-site residues include H530 and E532.

The protein belongs to the CTP synthase family. Homotetramer.

The catalysed reaction is UTP + L-glutamine + ATP + H2O = CTP + L-glutamate + ADP + phosphate + 2 H(+). It catalyses the reaction L-glutamine + H2O = L-glutamate + NH4(+). It carries out the reaction UTP + NH4(+) + ATP = CTP + ADP + phosphate + 2 H(+). Its pathway is pyrimidine metabolism; CTP biosynthesis via de novo pathway; CTP from UDP: step 2/2. Allosterically activated by GTP, when glutamine is the substrate; GTP has no effect on the reaction when ammonia is the substrate. The allosteric effector GTP functions by stabilizing the protein conformation that binds the tetrahedral intermediate(s) formed during glutamine hydrolysis. Inhibited by the product CTP, via allosteric rather than competitive inhibition. Catalyzes the ATP-dependent amination of UTP to CTP with either L-glutamine or ammonia as the source of nitrogen. Regulates intracellular CTP levels through interactions with the four ribonucleotide triphosphates. In Corynebacterium efficiens (strain DSM 44549 / YS-314 / AJ 12310 / JCM 11189 / NBRC 100395), this protein is CTP synthase.